The primary structure comprises 464 residues: Glucose-6-phosphate isomerase (464 aa).

Glu-290 serves as the catalytic Proton donor. Active-site residues include His-319 and Lys-433.

It belongs to the GPI family.

The protein resides in the cytoplasm. It catalyses the reaction alpha-D-glucose 6-phosphate = beta-D-fructose 6-phosphate. It functions in the pathway carbohydrate biosynthesis; gluconeogenesis. Its pathway is carbohydrate degradation; glycolysis; D-glyceraldehyde 3-phosphate and glycerone phosphate from D-glucose: step 2/4. In terms of biological role, catalyzes the reversible isomerization of glucose-6-phosphate to fructose-6-phosphate. The protein is Glucose-6-phosphate isomerase of Carboxydothermus hydrogenoformans (strain ATCC BAA-161 / DSM 6008 / Z-2901).